A 422-amino-acid chain; its full sequence is Fasciclin-like arabinogalactan protein 10 (422 aa).

Residues 1 to 25 (MATSRAFTLFAFTLSLLTVASTVSG) form the signal peptide. FAS1 domains lie at 26 to 172 (HNIT…NAPI) and 187 to 327 (GVSN…DNVL). N-linked (GlcNAc...) asparagine glycosylation is found at asparagine 27, asparagine 128, asparagine 162, asparagine 190, and asparagine 244. Residues 336–397 (SSSPAPAPEP…PTSSENSNAK (62 aa)) are disordered. Pro residues predominate over residues 340 to 374 (APAPEPVSAPTPTPAKSPSPVEAPSPTAASPPAPP). Positions 386-397 (DSPTSSENSNAK) are enriched in polar residues. A lipid anchor (GPI-anchor amidated asparagine) is attached at asparagine 398. Positions 399–422 (AAFHVNAPALFTALVTIAATSLLL) are cleaved as a propeptide — removed in mature form.

It belongs to the fasciclin-like AGP family.

Its subcellular location is the cell membrane. In terms of biological role, may be a cell surface adhesion protein. The protein is Fasciclin-like arabinogalactan protein 10 (FLA10) of Arabidopsis thaliana (Mouse-ear cress).